The primary structure comprises 550 residues: MCFNQRILIGSISTEQLNKTIVIIGWIKRIKKLGEINFIIVGDKSGTIQVTCKDKEQIQQLTREDIVIVKAKLQRLDSVRFELINPTIKLFSKSKTPPLIIEDETDALEEVRLKYRYLDLRRRLMQKRLLLRHQFILAIRNWFNQQGFIEIETPTLSKSTPEGAQDFLVPARIRKDCFYALVQSPQIYKQLLMIAGVEKYFQIARVYRDEDSRKDRQPEHTQIDFEISFCNQKMIMNLVEKLFFSVFLDVFQIKIKKTFPVFKFSELFERFGSDKPDLRYGFEIKDFTSLFQDHQNQFTKLIEAKGIIGGIELTNIELSTDKIKALRKIAKDHDVSLEVHNKNNSTLKTSIKCDEKNTLLLVANKSKKKAWTALGAIRNELKYHLDIVKPNQYSFCWVVDFPLYDFDEKTNQWISNHNIFSKPKQEWIDNFESNKNEALSEQFDLVLNGFEIGSGSIRINDPIVQKRLMNSLNIDPNKFAFLLEAYQYGAPVHGGMGLGIDRLMMILNQTDNIREVIAFPKNNHGIEVHTNAPDKIDKEEVKWWIKELVK.

Glu162 is an L-aspartate binding site. The tract at residues 186–189 (QIYK) is aspartate. Arg208 provides a ligand contact to L-aspartate. ATP contacts are provided by residues 208–210 (RDE) and Gln217. His417 is a binding site for L-aspartate. Glu451 is an ATP binding site. Arg458 serves as a coordination point for L-aspartate. 499-502 (GIDR) lines the ATP pocket.

It belongs to the class-II aminoacyl-tRNA synthetase family. Type 1 subfamily. In terms of assembly, homodimer.

Its subcellular location is the cytoplasm. It carries out the reaction tRNA(Asp) + L-aspartate + ATP = L-aspartyl-tRNA(Asp) + AMP + diphosphate. Functionally, catalyzes the attachment of L-aspartate to tRNA(Asp) in a two-step reaction: L-aspartate is first activated by ATP to form Asp-AMP and then transferred to the acceptor end of tRNA(Asp). In Mycoplasma genitalium (strain ATCC 33530 / DSM 19775 / NCTC 10195 / G37) (Mycoplasmoides genitalium), this protein is Aspartate--tRNA ligase.